The following is a 1108-amino-acid chain: DNA-directed RNA polymerase subunit beta (1108 aa).

The tract at residues serine 1081–phenylalanine 1108 is disordered.

This sequence belongs to the RNA polymerase beta chain family. As to quaternary structure, in cyanobacteria the RNAP catalytic core is composed of 2 alpha, 1 beta, 1 beta', 1 gamma and 1 omega subunit. When a sigma factor is associated with the core the holoenzyme is formed, which can initiate transcription.

It carries out the reaction RNA(n) + a ribonucleoside 5'-triphosphate = RNA(n+1) + diphosphate. Its function is as follows. DNA-dependent RNA polymerase catalyzes the transcription of DNA into RNA using the four ribonucleoside triphosphates as substrates. The protein is DNA-directed RNA polymerase subunit beta of Thermosynechococcus vestitus (strain NIES-2133 / IAM M-273 / BP-1).